A 229-amino-acid chain; its full sequence is Glutathione S-transferase 1 (229 aa).

One can recognise a GST N-terminal domain in the interval 2 to 86 (AQFTLWSHAH…YLADKYDTER (85 aa)). In terms of domain architecture, GST C-terminal spans 93 to 229 (DHPEYYKVIQ…FEERSKALDN (137 aa)).

Belongs to the GST superfamily.

It carries out the reaction RX + glutathione = an S-substituted glutathione + a halide anion + H(+). Functionally, involved in the oxidative stress response and detoxification. The chain is Glutathione S-transferase 1 (gst1) from Schizosaccharomyces pombe (strain 972 / ATCC 24843) (Fission yeast).